An 83-amino-acid polypeptide reads, in one-letter code: Defensin-1 (83 aa).

Residues 1–33 (MAGKGVGSRLSTLFLLVLLVITIGMMQVQVAEG) form the signal peptide. 4 disulfide bridges follow: Cys36-Cys82, Cys47-Cys67, Cys53-Cys76, and Cys57-Cys78.

This sequence belongs to the DEFL family.

Its subcellular location is the secreted. Functionally, plant defense peptide. Has antifungal activity against B.cinera, F.oxysporum, F.solani and H.annosum with IC(50) values of 0.4 ug/ml, 2.9 ug/ml, 0.9 ug/ml and 1.4 ug/ml, respectively. Has modest antifungal activity against C.albicans and T.reesei. Causes thickening of F.oxysporum hyphae and an increase in their branching. Lacks antibacterial activity against the Gram-negative bacteria E.coli and E.carotovora. In Pinus sylvestris (Scotch pine), this protein is Defensin-1.